A 393-amino-acid chain; its full sequence is Phosphopentomutase (393 aa).

Residues Asp-13, Asp-286, His-291, Asp-327, His-328, and His-339 each contribute to the Mn(2+) site.

The protein belongs to the phosphopentomutase family. Mn(2+) serves as cofactor.

It localises to the cytoplasm. The catalysed reaction is 2-deoxy-alpha-D-ribose 1-phosphate = 2-deoxy-D-ribose 5-phosphate. It catalyses the reaction alpha-D-ribose 1-phosphate = D-ribose 5-phosphate. Its pathway is carbohydrate degradation; 2-deoxy-D-ribose 1-phosphate degradation; D-glyceraldehyde 3-phosphate and acetaldehyde from 2-deoxy-alpha-D-ribose 1-phosphate: step 1/2. Functionally, isomerase that catalyzes the conversion of deoxy-ribose 1-phosphate (dRib-1-P) and ribose 1-phosphate (Rib-1-P) to deoxy-ribose 5-phosphate (dRib-5-P) and ribose 5-phosphate (Rib-5-P), respectively. The sequence is that of Phosphopentomutase from Symbiobacterium thermophilum (strain DSM 24528 / JCM 14929 / IAM 14863 / T).